The sequence spans 380 residues: Flap endonuclease 1 (380 aa).

Residues 1–104 (MGIKGLSQLI…GELTKRAEKR (104 aa)) are N-domain. Aspartate 34 provides a ligand contact to Mg(2+). DNA is bound by residues arginine 47 and arginine 70. Mg(2+) contacts are provided by aspartate 86, glutamate 158, glutamate 160, aspartate 179, and aspartate 181. The I-domain stretch occupies residues 122 to 253 (DIDKFNRRLV…KKAVELINKH (132 aa)). Glutamate 158 is a binding site for DNA. DNA-binding residues include glycine 231 and aspartate 233. Aspartate 233 is a binding site for Mg(2+). Residues 336-344 (TQGRLDSFF) form an interaction with PCNA region. Residues 342–380 (SFFKVLPSTPNPKRKIEDKKTPASKKAKTTGGKPGRKPK) are disordered. The segment covering 363–380 (PASKKAKTTGGKPGRKPK) has biased composition (basic residues).

It belongs to the XPG/RAD2 endonuclease family. FEN1 subfamily. As to quaternary structure, interacts with PCNA. Three molecules of FEN1 bind to one PCNA trimer with each molecule binding to one PCNA monomer. PCNA stimulates the nuclease activity without altering cleavage specificity. Mg(2+) serves as cofactor. In terms of processing, phosphorylated. Phosphorylation upon DNA damage induces relocalization to the nuclear plasma.

Its subcellular location is the nucleus. It is found in the nucleolus. The protein localises to the nucleoplasm. The protein resides in the mitochondrion. Structure-specific nuclease with 5'-flap endonuclease and 5'-3' exonuclease activities involved in DNA replication and repair. During DNA replication, cleaves the 5'-overhanging flap structure that is generated by displacement synthesis when DNA polymerase encounters the 5'-end of a downstream Okazaki fragment. It enters the flap from the 5'-end and then tracks to cleave the flap base, leaving a nick for ligation. Also involved in the long patch base excision repair (LP-BER) pathway, by cleaving within the apurinic/apyrimidinic (AP) site-terminated flap. Acts as a genome stabilization factor that prevents flaps from equilibrating into structures that lead to duplications and deletions. Also possesses 5'-3' exonuclease activity on nicked or gapped double-stranded DNA, and exhibits RNase H activity. Also involved in replication and repair of rDNA and in repairing mitochondrial DNA. The sequence is that of Flap endonuclease 1 from Aedes aegypti (Yellowfever mosquito).